The primary structure comprises 119 residues: Large ribosomal subunit protein uL18 (119 aa).

This sequence belongs to the universal ribosomal protein uL18 family. As to quaternary structure, part of the 50S ribosomal subunit; part of the 5S rRNA/L5/L18/L25 subcomplex. Contacts the 5S and 23S rRNAs.

This is one of the proteins that bind and probably mediate the attachment of the 5S RNA into the large ribosomal subunit, where it forms part of the central protuberance. This is Large ribosomal subunit protein uL18 from Mycoplasmoides gallisepticum (strain R(low / passage 15 / clone 2)) (Mycoplasma gallisepticum).